The following is a 128-amino-acid chain: uncharacterized protein (128 aa).

Its subcellular location is the mitochondrion. This is an uncharacterized protein from Saccharomyces cerevisiae (strain ATCC 204508 / S288c) (Baker's yeast).